The sequence spans 149 residues: Probable ubiquitin-conjugating enzyme E2 W (149 aa).

Residues 4 to 149 form the UBC core domain; it reads RYAKRLQKEL…VRWMFHDDTV (146 aa). The active-site Glycyl thioester intermediate is the Cys-88.

It belongs to the ubiquitin-conjugating enzyme family.

The enzyme catalyses S-ubiquitinyl-[E1 ubiquitin-activating enzyme]-L-cysteine + [E2 ubiquitin-conjugating enzyme]-L-cysteine = [E1 ubiquitin-activating enzyme]-L-cysteine + S-ubiquitinyl-[E2 ubiquitin-conjugating enzyme]-L-cysteine.. It carries out the reaction S-ubiquitinyl-[E1 ubiquitin-activating enzyme]-L-cysteine + [acceptor protein]-N-terminal-amino acid = [E1 ubiquitin-activating enzyme]-L-cysteine + N-terminal-ubiquitinyl-[acceptor protein].. It functions in the pathway protein modification; protein ubiquitination. Its function is as follows. Catalyzes the covalent attachment of ubiquitin to other proteins. This is Probable ubiquitin-conjugating enzyme E2 W (ube2w) from Dictyostelium discoideum (Social amoeba).